Reading from the N-terminus, the 249-residue chain is MLNLFQIMNMINNDVPTPYGFYFQDSATPNQEGILELHDNIMFYLVVILGLVSWMLFTIVRTYSRNPMAYKYIKHGQTIEIIWKIFPAVILLTIAFPSFILLYLCDEVISPAMTIKAIGYQWYWKYEYFDFINDNGETIEFESYVIPDSLLEEGQLRLLDTDTSIVVPVDTHIRFIVTAADVIHDFAIPSLGIKVDGTPGRLNQVSTLIQREGVFYGMCSELCGIGHAQMPIKVEAVSLPKFLEWLNEQ.

A signal peptide spans 1–13 (MLNLFQIMNMINN). The Mitochondrial intermembrane segment spans residues 14–40 (DVPTPYGFYFQDSATPNQEGILELHDN). The helical transmembrane segment at 41-62 (IMFYLVVILGLVSWMLFTIVRT) threads the bilayer. Over 63 to 80 (YSRNPMAYKYIKHGQTIE) the chain is Mitochondrial matrix. A helical membrane pass occupies residues 81–105 (IIWKIFPAVILLTIAFPSFILLYLC). Over 106 to 249 (DEVISPAMTI…PKFLEWLNEQ (144 aa)) the chain is Mitochondrial intermembrane. Cu cation-binding residues include H184, C219, E221, C223, H227, and M230. E221 is a binding site for Mg(2+).

The protein belongs to the cytochrome c oxidase subunit 2 family. Component of the cytochrome c oxidase (complex IV, CIV), a multisubunit enzyme composed of a catalytic core of 3 subunits and several supernumerary subunits. The complex exists as a monomer or a dimer and forms supercomplexes (SCs) in the inner mitochondrial membrane with ubiquinol-cytochrome c oxidoreductase (cytochrome b-c1 complex, complex III, CIII). Cu cation is required as a cofactor. In terms of processing, the signal sequence of COX2 is processed by IMP1.

The protein localises to the mitochondrion inner membrane. The catalysed reaction is 4 Fe(II)-[cytochrome c] + O2 + 8 H(+)(in) = 4 Fe(III)-[cytochrome c] + 2 H2O + 4 H(+)(out). In terms of biological role, component of the cytochrome c oxidase, the last enzyme in the mitochondrial electron transport chain which drives oxidative phosphorylation. The respiratory chain contains 3 multisubunit complexes succinate dehydrogenase (complex II, CII), ubiquinol-cytochrome c oxidoreductase (cytochrome b-c1 complex, complex III, CIII) and cytochrome c oxidase (complex IV, CIV), that cooperate to transfer electrons derived from NADH and succinate to molecular oxygen, creating an electrochemical gradient over the inner membrane that drives transmembrane transport and the ATP synthase. Cytochrome c oxidase is the component of the respiratory chain that catalyzes the reduction of oxygen to water. Electrons originating from reduced cytochrome c in the intermembrane space (IMS) are transferred via the dinuclear copper A center (CU(A)) of subunit 2 and heme A of subunit 1 to the active site in subunit 1, a binuclear center (BNC) formed by heme A3 and copper B (CU(B)). The BNC reduces molecular oxygen to 2 water molecules using 4 electrons from cytochrome c in the IMS and 4 protons from the mitochondrial matrix. This Maudiozyma exigua (Yeast) protein is Cytochrome c oxidase subunit 2 (COX2).